The chain runs to 165 residues: 6,7-dimethyl-8-ribityllumazine synthase (165 aa).

5-amino-6-(D-ribitylamino)uracil-binding positions include tryptophan 26, 57-59 (SVE), and 79-81 (VVV). 84–85 (AT) contributes to the (2S)-2-hydroxy-3-oxobutyl phosphate binding site. Histidine 87 (proton donor) is an active-site residue. Histidine 112 is a binding site for 5-amino-6-(D-ribitylamino)uracil. Position 126 (arginine 126) interacts with (2S)-2-hydroxy-3-oxobutyl phosphate.

This sequence belongs to the DMRL synthase family.

It catalyses the reaction (2S)-2-hydroxy-3-oxobutyl phosphate + 5-amino-6-(D-ribitylamino)uracil = 6,7-dimethyl-8-(1-D-ribityl)lumazine + phosphate + 2 H2O + H(+). Its pathway is cofactor biosynthesis; riboflavin biosynthesis; riboflavin from 2-hydroxy-3-oxobutyl phosphate and 5-amino-6-(D-ribitylamino)uracil: step 1/2. Functionally, catalyzes the formation of 6,7-dimethyl-8-ribityllumazine by condensation of 5-amino-6-(D-ribitylamino)uracil with 3,4-dihydroxy-2-butanone 4-phosphate. This is the penultimate step in the biosynthesis of riboflavin. The chain is 6,7-dimethyl-8-ribityllumazine synthase from Salinispora arenicola (strain CNS-205).